The chain runs to 287 residues: Probable phosphite transport system-binding protein PtxB (287 aa).

An N-terminal signal peptide occupies residues 1–23; that stretch reads MKRLSALLLTCLLSAVSSLSALA.

This sequence belongs to the phosphate/phosphite/phosphonate binding protein family.

In terms of biological role, probably forms part of a binding-protein-dependent phosphite transporter. Required for oxidation of phosphite to phosphate. This Stutzerimonas stutzeri (Pseudomonas stutzeri) protein is Probable phosphite transport system-binding protein PtxB (ptxB).